The sequence spans 432 residues: uncharacterized protein (432 aa).

In terms of domain architecture, Cytochrome c spans 223 to 432 (ASAVRGEALF…KDLIEYLKTR (210 aa)). Residues cysteine 236, cysteine 239, and histidine 240 each coordinate heme c.

This is an uncharacterized protein from Sinorhizobium fredii (strain NBRC 101917 / NGR234).